Here is a 455-residue protein sequence, read N- to C-terminus: Chitin deacetylase 2 (455 aa).

A signal peptide spans 1-19; that stretch reads MIPSTAAALLTLTAGAAFA. Asn86, Asn98, Asn122, and Asn142 each carry an N-linked (GlcNAc...) asparagine glycan. The NodB homology domain occupies 157–347; it reads MTWGLGFDDG…IKSAFNYIVP (191 aa). Asp164 functions as the Proton acceptor in the catalytic mechanism. Residue Asp164 participates in acetate binding. Residue Asp165 coordinates Co(2+). The N-linked (GlcNAc...) asparagine glycan is linked to Asn168. Residues His214 and His218 each coordinate Co(2+). Tyr255 is a binding site for acetate. Residues Asn270 and Asn308 are each glycosylated (N-linked (GlcNAc...) asparagine). The active-site Proton donor is the His321. N-linked (GlcNAc...) asparagine glycosylation is found at Asn325, Asn353, Asn362, and Asn377. A disordered region spans residues 381–423; sequence STTQKDGSSSTNTASGSGAAGSASATSSSDDSSSSGGSSGSSG. A glycan (N-linked (GlcNAc...) asparagine) is linked at Asn426. A lipid anchor (GPI-anchor amidated serine) is attached at Ser429. Residues 430–455 constitute a propeptide, removed in mature form; that stretch reads GALGMFDSLSGVGLILGGVVAGVMLL.

Belongs to the polysaccharide deacetylase family. Requires Co(2+) as cofactor. Post-translationally, the GPI anchor is required for the attachment to the cell membrane but not for cell surface targeting.

It localises to the secreted. The protein localises to the cell wall. The protein resides in the cell membrane. It catalyses the reaction [(1-&gt;4)-N-acetyl-beta-D-glucosaminyl](n) + n H2O = chitosan + n acetate. Hydrolyzes the N-acetamido groups of N-acetyl-D-glucosamine residues in chitin to form chitosan and acetate. Chitosan is required to anchor melanin to the cell wall, for maintenance of cell wall integrity, and for proper cytokinesis. Chitosan offers an advantage during infection as it is less readily detected than chitin by host immunosurveillance mechanisms. This is Chitin deacetylase 2 from Cryptococcus neoformans var. grubii serotype A (strain H99 / ATCC 208821 / CBS 10515 / FGSC 9487) (Filobasidiella neoformans var. grubii).